Consider the following 269-residue polypeptide: Type 4 prepilin-like proteins leader peptide-processing enzyme (269 aa).

Helical transmembrane passes span 13–33 (MPVLATVGGLIIGSFLNVVIW), 102–122 (YPLVELLTALAFLLASLVWPE), 124–144 (GWALAVMILSAWLIAASVIDL), 147–167 (QWLPDVFTQGVLWTGLIAAWA), 178–198 (VTGVLVGFIAFYSLRWIAGIV), 210–230 (LLFAALGSWVGPLSLPNVALI), and 249–269 (LPFGPCLSLGGIATIYLQALF).

The protein belongs to the peptidase A24 family.

It is found in the cell inner membrane. It catalyses the reaction Typically cleaves a -Gly-|-Phe- bond to release an N-terminal, basic peptide of 5-8 residues from type IV prepilin, and then N-methylates the new N-terminal amino group, the methyl donor being S-adenosyl-L-methionine.. Its function is as follows. Cleaves type-4 fimbrial leader sequence and methylates the N-terminal (generally Phe) residue. This Escherichia coli O78:H11 (strain H10407 / ETEC) protein is Type 4 prepilin-like proteins leader peptide-processing enzyme.